Consider the following 414-residue polypeptide: Putative competence-damage inducible protein (414 aa).

Belongs to the CinA family.

The polypeptide is Putative competence-damage inducible protein (Moorella thermoacetica (strain ATCC 39073 / JCM 9320)).